The chain runs to 99 residues: Large ribosomal subunit protein bL28 (99 aa).

Residues 1–25 form a disordered region; the sequence is MSRKCAVTGKGVQTGNNVSHANNKS. Positions 11–22 are enriched in polar residues; it reads GVQTGNNVSHAN.

It belongs to the bacterial ribosomal protein bL28 family.

This Rhodospirillum centenum (strain ATCC 51521 / SW) protein is Large ribosomal subunit protein bL28.